A 365-amino-acid chain; its full sequence is Histidinol-phosphate aminotransferase (365 aa).

Residue lysine 222 is modified to N6-(pyridoxal phosphate)lysine.

This sequence belongs to the class-II pyridoxal-phosphate-dependent aminotransferase family. Histidinol-phosphate aminotransferase subfamily. Homodimer. Pyridoxal 5'-phosphate serves as cofactor.

The catalysed reaction is L-histidinol phosphate + 2-oxoglutarate = 3-(imidazol-4-yl)-2-oxopropyl phosphate + L-glutamate. Its pathway is amino-acid biosynthesis; L-histidine biosynthesis; L-histidine from 5-phospho-alpha-D-ribose 1-diphosphate: step 7/9. In Geobacillus sp. (strain WCH70), this protein is Histidinol-phosphate aminotransferase.